A 465-amino-acid chain; its full sequence is Keratin, type I cytoskeletal 13 (465 aa).

Polar residues predominate over residues 1–28 (MNFTSFSITQGSRPQPPSTRGFSGNSFK). The interval 1-47 (MNFTSFSITQGSRPQPPSTRGFSGNSFKSDLIPQSRRSHSVYGTPGS) is disordered. The segment at 1-98 (MNFTSFSITQ…SGGSDLLLGT (98 aa)) is head. Residues 99-135 (SGKEAMQNLNDRLASYLEKVRSLEERNRELEQKIREW) form a coil 1A region. Residues 100-412 (GKEAMQNLND…ILLEGDEGKF (313 aa)) form the IF rod domain. The tract at residues 136 to 154 (YEKQGAGTKTKDFSHYFKI) is linker 1. The coil 1B stretch occupies residues 155 to 246 (IADLQKQIHD…KSHDEEMKAL (92 aa)). The interval 247–269 (RSQLGGQVNVEVDAAPAEDLTKK) is linker 12. Residues 270 to 408 (LERMRQQYEQ…RTYRILLEGD (139 aa)) form a coil 2 region. Positions 409–465 (EGKFQTSPHHPSIVTKQTETVVTPVVITNVKTVVEEIIDGKIVSKKEYPGPPEKLMI) are tail.

Belongs to the intermediate filament family. In terms of assembly, heterotetramer of two type I and two type II keratins. Expressed in skin.

Functionally, type 1 keratin. May maintain oral mucosal cell homeostasis and tissue organization in response to mechanical stress. The chain is Keratin, type I cytoskeletal 13 (KRT13) from Protopterus aethiopicus (Marbled lungfish).